A 70-amino-acid chain; its full sequence is Large ribosomal subunit protein eL38 (70 aa).

K4 is covalently cross-linked (Glycyl lysine isopeptide (Lys-Gly) (interchain with G-Cter in SUMO2)). Residue K9 is modified to N6-acetyllysine; alternate. K9 is covalently cross-linked (Glycyl lysine isopeptide (Lys-Gly) (interchain with G-Cter in SUMO2); alternate). Residue K67 is modified to N6-acetyllysine.

The protein belongs to the eukaryotic ribosomal protein eL38 family. Component of the large ribosomal subunit.

Its subcellular location is the cytoplasm. Component of the large ribosomal subunit. The ribosome is a large ribonucleoprotein complex responsible for the synthesis of proteins in the cell. The polypeptide is Large ribosomal subunit protein eL38 (RPL38) (Macaca fascicularis (Crab-eating macaque)).